The primary structure comprises 695 residues: DSC E3 ubiquitin ligase complex subunit 1 (695 aa).

Residues Met-1–Ala-25 form the signal peptide. Topologically, residues Pro-26–Asn-319 are lumenal. A helical transmembrane segment spans residues His-320–Leu-340. The Cytoplasmic portion of the chain corresponds to Arg-341–Arg-353. The chain crosses the membrane as a helical span at residues Leu-354–Leu-374. Topologically, residues Ser-375–Lys-382 are lumenal. Residues Gly-383 to Met-403 form a helical membrane-spanning segment. Topologically, residues Arg-404–Arg-486 are cytoplasmic. A disordered region spans residues Pro-419–His-473. Residues Asn-427–Asn-454 are compositionally biased toward low complexity. The chain crosses the membrane as a helical span at residues Phe-487–Ile-507. The Lumenal portion of the chain corresponds to Tyr-508–Arg-509. Residues Phe-510–Gln-530 traverse the membrane as a helical segment. Topologically, residues Asn-531–Phe-540 are cytoplasmic. A helical transmembrane segment spans residues Thr-541 to Ile-561. Topologically, residues Asp-562–Lys-572 are lumenal. A helical transmembrane segment spans residues Tyr-573–Gln-593. Residues Asp-594 to Val-695 are Cytoplasmic-facing. The segment at Cys-634–Arg-689 adopts an RING-type; atypical zinc-finger fold.

In terms of assembly, component of the DSC E3 ubiquitin ligase complex composed of dsc1, dsc2, dsc3 and dsc4.

Its subcellular location is the endoplasmic reticulum membrane. It localises to the golgi apparatus membrane. It catalyses the reaction S-ubiquitinyl-[E2 ubiquitin-conjugating enzyme]-L-cysteine + [acceptor protein]-L-lysine = [E2 ubiquitin-conjugating enzyme]-L-cysteine + N(6)-ubiquitinyl-[acceptor protein]-L-lysine.. It participates in protein modification; protein ubiquitination. Catalytic component of the DSC E3 ubiquitin ligase complex which is required for the sre1 transcriptional activator proteolytic cleavage to release the soluble transcription factor from the membrane in low oxygen or sterol conditions. The complex also plays an important role in the multivesicular body (MVB) pathway and functions in a post-endoplasmic reticulum pathway for protein degradation. The sequence is that of DSC E3 ubiquitin ligase complex subunit 1 (dsc1) from Schizosaccharomyces pombe (strain 972 / ATCC 24843) (Fission yeast).